Reading from the N-terminus, the 1167-residue chain is Integrin alpha-10 (1167 aa).

Residues 1-22 (MELPFVTHLFLPLVFLTGLCSP) form the signal peptide. The Extracellular segment spans residues 23–1122 (FNLDEHHPRL…VVQTRPILIS (1100 aa)). 2 FG-GAP repeats span residues 24–85 (NLDE…HNAP) and 95–154 (QLGN…PQGS). An intrachain disulfide couples cysteine 76 to cysteine 86. N-linked (GlcNAc...) asparagine glycosylation is found at asparagine 98, asparagine 234, asparagine 336, and asparagine 364. A VWFA domain is found at 167–350 (DVVIVLDGSN…AALTDIVDAL (184 aa)). 5 FG-GAP repeats span residues 361-412 (HAEN…LFPP), 417-470 (EDEF…KDGA), 472-534 (RVAQ…SLLT), 535-593 (LQGT…GVRP), and 597-657 (QRIA…VTPQ). Residues aspartate 494, aspartate 496, aspartate 498, aspartate 502, aspartate 558, asparagine 560, aspartate 562, aspartate 566, aspartate 620, aspartate 622, aspartate 624, and aspartate 628 each contribute to the Ca(2+) site. Intrachain disulfides connect cysteine 666–cysteine 675 and cysteine 681–cysteine 736. N-linked (GlcNAc...) asparagine glycans are attached at residues asparagine 733 and asparagine 763. A disulfide bridge links cysteine 789 with cysteine 795. Residues asparagine 839, asparagine 921, asparagine 1011, asparagine 1018, and asparagine 1039 are each glycosylated (N-linked (GlcNAc...) asparagine). A helical membrane pass occupies residues 1123 to 1145 (LWILIGSVLGGLLLLALLVFCLW). Residues 1146–1167 (KLGFFAHKKIPEEEKREEKLEQ) are Cytoplasmic-facing.

This sequence belongs to the integrin alpha chain family. In terms of assembly, heterodimer of an alpha and a beta subunit. Alpha-10 associates with beta-1. As to expression, widely expressed with highest expression in muscle and heart. Found in articular cartilage.

The protein localises to the membrane. Functionally, integrin alpha-10/beta-1 is a receptor for collagen. This Homo sapiens (Human) protein is Integrin alpha-10 (ITGA10).